Reading from the N-terminus, the 125-residue chain is ATP synthase epsilon chain (125 aa).

The protein belongs to the ATPase epsilon chain family. F-type ATPases have 2 components, CF(1) - the catalytic core - and CF(0) - the membrane proton channel. CF(1) has five subunits: alpha(3), beta(3), gamma(1), delta(1), epsilon(1). CF(0) has three main subunits: a, b and c.

It localises to the cell inner membrane. Functionally, produces ATP from ADP in the presence of a proton gradient across the membrane. The polypeptide is ATP synthase epsilon chain (Aliarcobacter butzleri (strain RM4018) (Arcobacter butzleri)).